A 35-amino-acid chain; its full sequence is Delta-theraphotoxin-Hm1a (35 aa).

3 disulfide bridges follow: C2–C16, C9–C21, and C15–C28.

The protein belongs to the neurotoxin 10 (Hwtx-1) family. 09 (HaTx) subfamily. Expressed by the venom gland.

The protein localises to the secreted. Gating-modifier toxin that potently inhibits inactivation of the mammalian Nav1.1/SCN1A sodium channel (EC(50)=38 nM). Also moderately inhibits inactivation of Nav1.2/SCN2A (EC(50)=236 nM) and Nav1.3/SCN3A (EC(50)=220 nM) when the channels are expressed in oocytes without the beta-1 auxiliary subunit. Does not inhibit inactivation of Nav1.2/SCN2A when the channel is coexpressed with the beta-1 auxiliary subunit. When tested on Nav1.1/SCN1A channel, it enhances peak current amplitude and potently delays channel inactivation in a dose-dependent manner, leading to a large sustained current. It has no effect on the voltage-dependence of steady-state activation, and induces a depolarizing shift in the voltage dependence of inactivation. In addition, it does not modify the recovery from fast inactivation in Nav1.1/SCN1A. The binding affinity and subtype selectivity of the toxin towards Nav1.1/SCN1A channel is determined by residues within both the S1-S2 and S3-S4 loops of the domain IV voltage sensor of the channel. This toxin also weakly inhibits several subtypes of voltage-gated potassium channels. It moderately blocks Kv2.1/KCNB1 (23% inhibition at 100 nM), Kv2.2/KCNB2 (19.7% at 100 nM and 51% at 300 nM), Kv4.1/KCND1 (IC(50)=280 nM), Kv4.2/KCND2 (39% at 300 nM) and Kv4.3/KCND3 (43% at 300 nM). In vivo, intracerebroventricular injection into mice elicits convulsions, spasms, tremors and rapid death. When injected into mouse hindpaw, the toxin elicits an immediate and robust response to pain. However, intraplantar injection of toxin does not cause neurogenic inflammation or alter sensitivity to heat, indicative of a modality-specific effect on mechanosensitive neurons. In Dravet syndrome mice model, intracerebroventricular infusion of this peptide rescues mice from seizures and premature death. In Heteroscodra maculata (Togo starburst tarantula), this protein is Delta-theraphotoxin-Hm1a.